Consider the following 485-residue polypeptide: Adenosylhomocysteinase 1 (485 aa).

Residues threonine 64, aspartate 139, and glutamate 205 each coordinate substrate. 206 to 208 (TTT) provides a ligand contact to NAD(+). The substrate site is built by lysine 235 and aspartate 239. NAD(+) contacts are provided by residues 271–276 (GDVGKG), glutamate 292, 348–350 (IGH), asparagine 397, histidine 404, lysine 479, 479–483 (KPPHY), and tyrosine 483.

This sequence belongs to the adenosylhomocysteinase family. As to quaternary structure, homotetramer. Requires NAD(+) as cofactor.

It carries out the reaction S-adenosyl-L-homocysteine + H2O = L-homocysteine + adenosine. It functions in the pathway amino-acid biosynthesis; L-homocysteine biosynthesis; L-homocysteine from S-adenosyl-L-homocysteine: step 1/1. Essential protein during embryogenesis. Adenosylhomocysteine is a competitive inhibitor of S-adenosyl-L-methionine-dependent methyl transferase reactions; therefore adenosylhomocysteinase may play a key role in the control of methylations via regulation of the intracellular concentration of adenosylhomocysteine. Required for DNA methylation-dependent gene silencing. The polypeptide is Adenosylhomocysteinase 1 (Arabidopsis thaliana (Mouse-ear cress)).